A 285-amino-acid chain; its full sequence is Neuralized-like protein 2 (285 aa).

Residues 1–28 form a disordered region; that stretch reads MADPSEHVGLGGPRSPARPEPPPTRFHQ. One can recognise an NHR domain in the interval 23 to 244; sequence PTRFHQVHGA…STKSVRLVQL (222 aa). An SOCS box domain is found at 250–285; sequence SLQTLCRLVIHKRVVHRLAIDVLHLPKGLKDFCKYE.

As to quaternary structure, probable component the ECS(NEURL2) E3 ubiquitin-protein ligase complex consisting of ELOB/Elongin B, ELOC/Elongin C, CUL5, RBX1 and NEURL2. Interacts with CTNNB1. Expressed specifically in skeletal and cardiac muscles.

It localises to the cytoplasm. The protein operates within protein modification; protein ubiquitination. Plays an important role in the process of myofiber differentiation and maturation. Probable substrate-recognition component of a SCF-like ECS (Elongin BC-CUL2/5-SOCS-box protein) E3 ubiquitin-protein ligase complex, which mediates the ubiquitination of proteins. Probably contributes to catalysis through recognition and positioning of the substrate and the ubiquitin-conjugating enzyme. During myogenesis, controls the ubiquitination and degradation of the specific pool of CTNNB1/beta-catenin located at the sarcolemma. The chain is Neuralized-like protein 2 (Neurl2) from Mus musculus (Mouse).